The sequence spans 267 residues: Ribosomal RNA small subunit methyltransferase A (267 aa).

S-adenosyl-L-methionine-binding residues include Asn-18, Leu-20, Gly-45, Glu-66, Asp-91, and Asn-112.

Belongs to the class I-like SAM-binding methyltransferase superfamily. rRNA adenine N(6)-methyltransferase family. RsmA subfamily.

The protein localises to the cytoplasm. The catalysed reaction is adenosine(1518)/adenosine(1519) in 16S rRNA + 4 S-adenosyl-L-methionine = N(6)-dimethyladenosine(1518)/N(6)-dimethyladenosine(1519) in 16S rRNA + 4 S-adenosyl-L-homocysteine + 4 H(+). Its function is as follows. Specifically dimethylates two adjacent adenosines (A1518 and A1519) in the loop of a conserved hairpin near the 3'-end of 16S rRNA in the 30S particle. May play a critical role in biogenesis of 30S subunits. In Shewanella pealeana (strain ATCC 700345 / ANG-SQ1), this protein is Ribosomal RNA small subunit methyltransferase A.